The chain runs to 139 residues: Hydrogenase maturation factor HypA (139 aa).

Ni(2+) is bound at residue His-2. The Zn(2+) site is built by Cys-73, Cys-76, Cys-110, and Cys-113.

Belongs to the HypA/HybF family.

Its function is as follows. Involved in the maturation of [NiFe] hydrogenases. Required for nickel insertion into the metal center of the hydrogenase. This is Hydrogenase maturation factor HypA from Pyrococcus horikoshii (strain ATCC 700860 / DSM 12428 / JCM 9974 / NBRC 100139 / OT-3).